Reading from the N-terminus, the 996-residue chain is Cilia- and flagella-associated protein 251 (996 aa).

11 WD repeats span residues 73 to 114 (GHCN…PKKT), 118 to 164 (PHPN…EPCL), 168 to 211 (EFDR…KGFN), 219 to 258 (PSLK…EKVD), 282 to 319 (KGSN…IAWF), 399 to 438 (SIVS…SVLS), 445 to 485 (TDKE…WQNS), 494 to 533 (QGKP…FDVN), 547 to 593 (IHHS…YSKQ), 615 to 658 (EQET…FKFC), and 719 to 759 (AHPD…LEQI). The disordered stretch occupies residues 971–996 (DLEGEERDDNIEDQYEDEENEEYDQD).

The protein localises to the cell projection. It is found in the cilium. In terms of biological role, as component of a spoke-associated complex, regulates ciliary mobility by mediating a stable and functional assembly of the radial spoke 3 (RS3). The protein is Cilia- and flagella-associated protein 251 of Tetrahymena thermophila (strain SB210).